Reading from the N-terminus, the 279-residue chain is Thymidylate synthase (279 aa).

A dUMP-binding site is contributed by 133–134; sequence RR. C154 functions as the Nucleophile in the catalytic mechanism. DUMP is bound by residues 178–181, N189, and 219–221; these read RSND and HIY. (6R)-5,10-methylene-5,6,7,8-tetrahydrofolate is bound at residue D181. (6R)-5,10-methylene-5,6,7,8-tetrahydrofolate is bound at residue A278.

This sequence belongs to the thymidylate synthase family. Bacterial-type ThyA subfamily. As to quaternary structure, homodimer.

The protein localises to the cytoplasm. The enzyme catalyses dUMP + (6R)-5,10-methylene-5,6,7,8-tetrahydrofolate = 7,8-dihydrofolate + dTMP. It functions in the pathway pyrimidine metabolism; dTTP biosynthesis. Its function is as follows. Catalyzes the reductive methylation of 2'-deoxyuridine-5'-monophosphate (dUMP) to 2'-deoxythymidine-5'-monophosphate (dTMP) while utilizing 5,10-methylenetetrahydrofolate (mTHF) as the methyl donor and reductant in the reaction, yielding dihydrofolate (DHF) as a by-product. This enzymatic reaction provides an intracellular de novo source of dTMP, an essential precursor for DNA biosynthesis. This chain is Thymidylate synthase, found in Streptococcus pyogenes serotype M3 (strain SSI-1).